The sequence spans 298 residues: Rhodomycin D methylesterase DnrP (298 aa).

The region spanning 25-277 (PLLLIAGGNL…VEIENMGHAL (253 aa)) is the AB hydrolase-1 domain.

The protein belongs to the methyl esterase DnrP family.

It carries out the reaction rhodomycin D + H2O = 10-carboxy-13-deoxycarminomycin + methanol + H(+). It catalyses the reaction 4-O-methylrhodomycin D + H2O = 10-carboxy-13-deoxydaunorubicin + methanol + H(+). The protein operates within antibiotic biosynthesis; daunorubicin biosynthesis. It functions in the pathway antibiotic biosynthesis; carminomycin biosynthesis. In terms of biological role, involved in the biosynthesis of the anthracyclines carminomycin and daunorubicin (daunomycin) which are aromatic polyketide antibiotics that exhibit high cytotoxicity and are widely applied in the chemotherapy of a variety of cancers. Catalyzes the removal of methyl group from the carbomethoxy group of rhodomycin D (10-carbomethoxy-13-deoxycarminomycin) and 4-O-methylrhodomycin D to yield 10-carboxy-13-deoxycarminomycin and 10-carboxy-13-deoxydaunorubicin, respectively. Could be also involved in the decarboxylation of 10-carboxy-13-deoxycarminomycin and 10-carboxy-13-deoxydaunorubicin to yield 13-deoxycarminomycin and 13-deoxydaunorubicin, respectively. It seems that DnrK may influence the ability of DnrP to carry out the decarboxylation. In Streptomyces peucetius, this protein is Rhodomycin D methylesterase DnrP (dnrP).